Reading from the N-terminus, the 146-residue chain is Hemoglobin subunit beta (146 aa).

Val-1 bears the N-acetylvaline mark. Positions 2-146 constitute a Globin domain; that stretch reads HLTGEEKSAV…VANALAHKYH (145 aa). Thr-12 carries the phosphothreonine modification. Phosphoserine is present on Ser-44. Lys-59 carries the N6-acetyllysine modification. His-63 serves as a coordination point for heme b. Lys-82 bears the N6-acetyllysine mark. Heme b is bound at residue His-92. An S-nitrosocysteine modification is found at Cys-93. Lys-144 carries the N6-acetyllysine modification.

It belongs to the globin family. Heterotetramer of two alpha chains and two beta chains. Red blood cells.

In terms of biological role, involved in oxygen transport from the lung to the various peripheral tissues. This chain is Hemoglobin subunit beta (HBB), found in Leontocebus fuscicollis (Brown-mantled tamarin).